An 885-amino-acid chain; its full sequence is Alanine--tRNA ligase (885 aa).

Residues His-564, His-568, Cys-676, and His-680 each coordinate Zn(2+).

It belongs to the class-II aminoacyl-tRNA synthetase family. The cofactor is Zn(2+).

Its subcellular location is the cytoplasm. It carries out the reaction tRNA(Ala) + L-alanine + ATP = L-alanyl-tRNA(Ala) + AMP + diphosphate. Functionally, catalyzes the attachment of alanine to tRNA(Ala) in a two-step reaction: alanine is first activated by ATP to form Ala-AMP and then transferred to the acceptor end of tRNA(Ala). Also edits incorrectly charged Ser-tRNA(Ala) and Gly-tRNA(Ala) via its editing domain. This is Alanine--tRNA ligase from Brucella abortus (strain 2308).